The following is a 217-amino-acid chain: Large ribosomal subunit protein uL3 (217 aa).

Belongs to the universal ribosomal protein uL3 family. Part of the 50S ribosomal subunit. Forms a cluster with proteins L14 and L19.

In terms of biological role, one of the primary rRNA binding proteins, it binds directly near the 3'-end of the 23S rRNA, where it nucleates assembly of the 50S subunit. In Mycobacterium bovis (strain ATCC BAA-935 / AF2122/97), this protein is Large ribosomal subunit protein uL3.